The following is a 214-amino-acid chain: MVMIMELLYAITAFILGMLHALEPGHGKSVVAAYILGTKADLKDAILLGTTITISHTAVIFLLGILSIYLLESLNVDVVHDMMSVVGGLILIAVGIWIIRSYLHPHEHKVDTKKGVITLGLSAGLVPCPAALAVLLLSISSGNLIDGLIYVAIFSIGLAISLTGLAVAFVESKELIKKYVGNRKVSKLPLISGSIIILIGLYTIAHPILEHAIV.

6 helical membrane passes run 2-22, 46-66, 79-99, 116-136, 149-169, and 188-208; these read VMIM…LHAL, ILLG…LGIL, VHDM…IWII, VITL…AVLL, IYVA…AVAF, and LPLI…AHPI.

The protein belongs to the NiCoT transporter (TC 2.A.52) family.

It is found in the cell membrane. Its function is as follows. Efflux system for nickel and cobalt. This chain is Putative nickel/cobalt efflux system MJ1092, found in Methanocaldococcus jannaschii (strain ATCC 43067 / DSM 2661 / JAL-1 / JCM 10045 / NBRC 100440) (Methanococcus jannaschii).